The primary structure comprises 290 residues: Short-chain dehydrogenase srdE (290 aa).

Residues Ile11, Thr37, Asp58, and Asn86 each coordinate NADP(+). Residues 125–145 (LIASSGIIVNIGSIGGVVPFV) form a helical membrane-spanning segment. Tyr150 serves as a coordination point for NADP(+). The active-site Proton donor is Tyr150. Asn151 carries N-linked (GlcNAc...) asparagine glycosylation. The NADP(+) site is built by Lys154, Val183, and Thr185. Lys154 serves as the catalytic Lowers pKa of active site Tyr.

Belongs to the short-chain dehydrogenases/reductases (SDR) family.

The protein resides in the membrane. Its function is as follows. Short-chain dehydrogenase; part of the gene cluster that mediates the biosynthesis of sordarial, a salicylic aldehyde structurally related to the phytotoxin pyriculol. The most interesting aspect of this pathway is formation of an aromatic product from the highly reducing polyketide synthase srdA. SrdA synthesizes a reduced polyketide chain from one molecule of acetyl-CoA and five molecules of malonyl-CoA. The polyketide chain is then reductively released as an aldehyde. The oxidoreductases srdC, srdD and srdE then oxidize one of the hydroxy groups to facilitate the intramolecular aldol condensation, followed by dehydration to yield a salicylic aldehyde. This aldehyde can undergo facile reduction by endogenous reductases to yield the alcohol 1-hydroxy-2-hydroxymethyl-3-pent-1,3-dienylbenzene. The flavin-dependent srdI counteract against the propensity of the aldehydes to be reduced under physiological conditions and is responsible for reoxidizing 1-hydroxy-2-hydroxymethyl-3-pent-1,3-dienylbenzene back to the salicylic aldehyde. This salicylic aldehyde is then selectively epoxidized by the cupin-domain-containing oxidoreductase srdB to yield the epoxide, which can be hydrolyzed stereoselectively by the hydrolase srdG to give the final product sordarial. The polypeptide is Short-chain dehydrogenase srdE (Neurospora crassa (strain ATCC 24698 / 74-OR23-1A / CBS 708.71 / DSM 1257 / FGSC 987)).